Consider the following 380-residue polypeptide: Chaperone protein DnaJ (380 aa).

The region spanning 5 to 70 (DYYEALGVAR…RKRTAYDQFG (66 aa)) is the J domain. The segment at 137-215 (GTTAKIRIPT…CRGEGRVREH (79 aa)) adopts a CR-type zinc-finger fold. 8 residues coordinate Zn(2+): cysteine 150, cysteine 153, cysteine 167, cysteine 170, cysteine 189, cysteine 192, cysteine 203, and cysteine 206. CXXCXGXG motif repeat units lie at residues 150–157 (CKACEGSG), 167–174 (CPTCGGHG), 189–196 (CPRCHGSG), and 203–210 (CSTCRGEG). The segment at 222 to 247 (IPPGVDTGDRIRLTGEGEAGESGGPP) is disordered.

The protein belongs to the DnaJ family. In terms of assembly, homodimer. It depends on Zn(2+) as a cofactor.

It is found in the cytoplasm. Its function is as follows. Participates actively in the response to hyperosmotic and heat shock by preventing the aggregation of stress-denatured proteins and by disaggregating proteins, also in an autonomous, DnaK-independent fashion. Unfolded proteins bind initially to DnaJ; upon interaction with the DnaJ-bound protein, DnaK hydrolyzes its bound ATP, resulting in the formation of a stable complex. GrpE releases ADP from DnaK; ATP binding to DnaK triggers the release of the substrate protein, thus completing the reaction cycle. Several rounds of ATP-dependent interactions between DnaJ, DnaK and GrpE are required for fully efficient folding. Also involved, together with DnaK and GrpE, in the DNA replication of plasmids through activation of initiation proteins. This is Chaperone protein DnaJ from Nitrosococcus oceani (strain ATCC 19707 / BCRC 17464 / JCM 30415 / NCIMB 11848 / C-107).